Consider the following 129-residue polypeptide: Probable protein cornichon homolog 2 (129 aa).

A run of 2 helical transmembrane segments spans residues 45–65 and 105–125; these read FIVQGVLCVFYLLTGHWFMTL and LAYIVLNLFLTIFWMIYSALD.

Belongs to the cornichon family.

The protein localises to the membrane. This chain is Probable protein cornichon homolog 2, found in Arabidopsis thaliana (Mouse-ear cress).